Reading from the N-terminus, the 929-residue chain is Thrombospondin-3b (929 aa).

The signal sequence occupies residues 1 to 22 (MELRKIVPNLLVLYVAVHFSQS). A Laminin G-like domain is found at 24-192 (EIKVINVLEL…VESVKLALGG (169 aa)). Residue N45 is glycosylated (N-linked (GlcNAc...) asparagine). Disulfide bonds link C277-C288, C282-C299, C319-C343, C349-C362, C356-C371, C374-C386, C392-C406, C400-C416, C418-C429, C445-C452, C457-C477, C493-C513, C516-C536, C552-C572, C575-C595, C613-C633, C653-C673, and C689-C910. The region spanning 345–384 (DIDECAELSGSCVPNSVCINTVGSFKCGQCKAGFVGNQTV) is the EGF-like 1; calcium-binding domain. An N-linked (GlcNAc...) asparagine glycan is attached at N381. The region spanning 388 to 430 (ARRTCETLGYSPCDVNSHCVMGRNSDVSCVCNVGWAGNGNICG) is the EGF-like 2 domain. 8 TSP type-3 repeats span residues 431–465 (PDSD…NSGQ), 466–501 (EDTD…NKDQ), 502–524 (QNSD…NGDQ), 525–560 (LDTD…NPMQ), 561–583 (TDRD…DPLQ), 584–621 (SDMD…NSSQ), 622–661 (LDSD…NPSQ), and 662–697 (IDTD…EVTM). Positions 602-613 (DGDGYQDTRDNC) are enriched in basic and acidic residues. The interval 602-651 (DGDGYQDTRDNCPEVPNSSQLDSDNDGIGDECDDDDDNDGIPDILPPGPD) is disordered. N-linked (GlcNAc...) asparagine glycosylation is present at N618. A compositionally biased stretch (acidic residues) spans 624–641 (SDNDGIGDECDDDDDNDG). Positions 701–915 (RAFQTVILDP…LGYRCNDSIP (215 aa)) constitute a TSP C-terminal domain. N911 is a glycosylation site (N-linked (GlcNAc...) asparagine).

This sequence belongs to the thrombospondin family. Oligomer; disulfide-linked.

Functionally, adhesive glycoprotein that mediates cell-to-cell and cell-to-matrix interactions. Can bind to fibrinogen, fibronectin, laminin and type V collagen. The polypeptide is Thrombospondin-3b (Danio rerio (Zebrafish)).